Reading from the N-terminus, the 319-residue chain is ATP-dependent 6-phosphofructokinase (319 aa).

An ATP-binding site is contributed by glycine 11. 21 to 25 serves as a coordination point for ADP; that stretch reads RAVVR. Residues 72–73 and 102–105 each bind ATP; these read RC and GDGS. Aspartate 103 is a binding site for Mg(2+). 125-127 lines the substrate pocket; the sequence is TID. The active-site Proton acceptor is the aspartate 127. Arginine 154 provides a ligand contact to ADP. Substrate contacts are provided by residues arginine 162 and 169 to 171; that span reads MGR. ADP is bound by residues 185-187, arginine 211, and 213-215; these read GAE and KKH. Substrate contacts are provided by residues glutamate 222, arginine 243, and 249 to 252; that span reads HMQR.

This sequence belongs to the phosphofructokinase type A (PFKA) family. ATP-dependent PFK group I subfamily. Prokaryotic clade 'B1' sub-subfamily. In terms of assembly, homotetramer. The cofactor is Mg(2+).

It localises to the cytoplasm. The enzyme catalyses beta-D-fructose 6-phosphate + ATP = beta-D-fructose 1,6-bisphosphate + ADP + H(+). The protein operates within carbohydrate degradation; glycolysis; D-glyceraldehyde 3-phosphate and glycerone phosphate from D-glucose: step 3/4. Its activity is regulated as follows. Allosterically activated by ADP and other diphosphonucleosides, and allosterically inhibited by phosphoenolpyruvate. Functionally, catalyzes the phosphorylation of D-fructose 6-phosphate to fructose 1,6-bisphosphate by ATP, the first committing step of glycolysis. This Macrococcus caseolyticus (strain JCSC5402) (Macrococcoides caseolyticum) protein is ATP-dependent 6-phosphofructokinase.